Consider the following 196-residue polypeptide: Putative 3-methyladenine DNA glycosylase (196 aa).

It belongs to the DNA glycosylase MPG family.

In Chlorobium phaeovibrioides (strain DSM 265 / 1930) (Prosthecochloris vibrioformis (strain DSM 265)), this protein is Putative 3-methyladenine DNA glycosylase.